A 448-amino-acid polypeptide reads, in one-letter code: Glutamyl-tRNA reductase (448 aa).

Substrate-binding positions include 49 to 52 (TCNR), serine 109, 114 to 116 (ETQ), and glutamine 120. Cysteine 50 serves as the catalytic Nucleophile. 189 to 194 (GAGEMG) serves as a coordination point for NADP(+).

This sequence belongs to the glutamyl-tRNA reductase family. As to quaternary structure, homodimer.

The catalysed reaction is (S)-4-amino-5-oxopentanoate + tRNA(Glu) + NADP(+) = L-glutamyl-tRNA(Glu) + NADPH + H(+). The protein operates within porphyrin-containing compound metabolism; protoporphyrin-IX biosynthesis; 5-aminolevulinate from L-glutamyl-tRNA(Glu): step 1/2. In terms of biological role, catalyzes the NADPH-dependent reduction of glutamyl-tRNA(Glu) to glutamate 1-semialdehyde (GSA). In Staphylococcus epidermidis (strain ATCC 35984 / DSM 28319 / BCRC 17069 / CCUG 31568 / BM 3577 / RP62A), this protein is Glutamyl-tRNA reductase.